A 337-amino-acid polypeptide reads, in one-letter code: Dolichyl-phosphate beta-glucosyltransferase ALG5C (337 aa).

The Lumenal portion of the chain corresponds to methionine 1 to proline 6. The chain crosses the membrane as a helical span at residues isoleucine 7–leucine 27. Over cysteine 28–valine 337 the chain is Cytoplasmic.

It belongs to the glycosyltransferase 2 family.

It localises to the endoplasmic reticulum membrane. The enzyme catalyses a di-trans,poly-cis-dolichyl phosphate + UDP-alpha-D-glucose = a di-trans,poly-cis-dolichyl beta-D-glucosyl phosphate + UDP. It participates in protein modification; protein glycosylation. Functionally, dolichyl-phosphate beta-glucosyltransferase involved in the glycosylation of glycoproteins through the synthesis of dolichyl beta-D-glucosyl phosphate which serves as a sugar donor for transfer of three glucose residues to the Man-9-GlcNAc-2-PP-dolichol precursor to N-glycans. In Trichomonas vaginalis (strain ATCC PRA-98 / G3), this protein is Dolichyl-phosphate beta-glucosyltransferase ALG5C.